A 788-amino-acid polypeptide reads, in one-letter code: Phenylalanine--tRNA ligase beta subunit (788 aa).

A tRNA-binding domain is found at 39–147 (FNVSGEIITA…DPVELGVNVV (109 aa)). Positions 399-472 (IEPKKVMLRK…RIYGYEKVES (74 aa)) constitute a B5 domain. The Mg(2+) site is built by D450, D456, E459, and E460. The FDX-ACB domain occupies 694 to 787 (PRFPAVRRDI…AEREFGIRRR (94 aa)).

Belongs to the phenylalanyl-tRNA synthetase beta subunit family. Type 1 subfamily. In terms of assembly, tetramer of two alpha and two beta subunits. The cofactor is Mg(2+).

It is found in the cytoplasm. The enzyme catalyses tRNA(Phe) + L-phenylalanine + ATP = L-phenylalanyl-tRNA(Phe) + AMP + diphosphate + H(+). The chain is Phenylalanine--tRNA ligase beta subunit (pheT) from Thermotoga maritima (strain ATCC 43589 / DSM 3109 / JCM 10099 / NBRC 100826 / MSB8).